Reading from the N-terminus, the 89-residue chain is UPF0335 protein RPE_4107 (89 aa).

The protein belongs to the UPF0335 family.

The sequence is that of UPF0335 protein RPE_4107 from Rhodopseudomonas palustris (strain BisA53).